A 356-amino-acid chain; its full sequence is Chorismate synthase (356 aa).

NADP(+) is bound by residues arginine 44 and arginine 49. FMN is bound by residues 121-123 (HFS), glycine 278, 293-297 (KPTPS), and arginine 320.

Belongs to the chorismate synthase family. The cofactor is FMNH2.

The enzyme catalyses 5-O-(1-carboxyvinyl)-3-phosphoshikimate = chorismate + phosphate. It functions in the pathway metabolic intermediate biosynthesis; chorismate biosynthesis; chorismate from D-erythrose 4-phosphate and phosphoenolpyruvate: step 7/7. In terms of biological role, catalyzes the anti-1,4-elimination of the C-3 phosphate and the C-6 proR hydrogen from 5-enolpyruvylshikimate-3-phosphate (EPSP) to yield chorismate, which is the branch point compound that serves as the starting substrate for the three terminal pathways of aromatic amino acid biosynthesis. This reaction introduces a second double bond into the aromatic ring system. This Thermococcus gammatolerans (strain DSM 15229 / JCM 11827 / EJ3) protein is Chorismate synthase.